The sequence spans 723 residues: Fatty acid oxidation complex subunit alpha (723 aa).

Residues 1 to 189 form an enoyl-CoA hydratase/isomerase region; the sequence is MIYQADTLQV…KIGLLDAVVE (189 aa). Substrate is bound at residue D296. Residues 311-723 are 3-hydroxyacyl-CoA dehydrogenase; that stretch reads SKDTERAAVL…FYGAQQQGSI (413 aa). NAD(+) is bound by residues M325, D344, 401 to 403, K408, and S430; that span reads VVE. The For 3-hydroxyacyl-CoA dehydrogenase activity role is filled by H451. An NAD(+)-binding site is contributed by N454. Substrate contacts are provided by N501 and Y661.

It in the N-terminal section; belongs to the enoyl-CoA hydratase/isomerase family. The protein in the C-terminal section; belongs to the 3-hydroxyacyl-CoA dehydrogenase family. As to quaternary structure, heterotetramer of two alpha chains (FadB) and two beta chains (FadA).

It catalyses the reaction a (3S)-3-hydroxyacyl-CoA + NAD(+) = a 3-oxoacyl-CoA + NADH + H(+). It carries out the reaction a (3S)-3-hydroxyacyl-CoA = a (2E)-enoyl-CoA + H2O. The catalysed reaction is a 4-saturated-(3S)-3-hydroxyacyl-CoA = a (3E)-enoyl-CoA + H2O. The enzyme catalyses (3S)-3-hydroxybutanoyl-CoA = (3R)-3-hydroxybutanoyl-CoA. It catalyses the reaction a (3Z)-enoyl-CoA = a 4-saturated (2E)-enoyl-CoA. It carries out the reaction a (3E)-enoyl-CoA = a 4-saturated (2E)-enoyl-CoA. It participates in lipid metabolism; fatty acid beta-oxidation. In terms of biological role, involved in the aerobic and anaerobic degradation of long-chain fatty acids via beta-oxidation cycle. Catalyzes the formation of 3-oxoacyl-CoA from enoyl-CoA via L-3-hydroxyacyl-CoA. It can also use D-3-hydroxyacyl-CoA and cis-3-enoyl-CoA as substrate. This Vibrio parahaemolyticus serotype O3:K6 (strain RIMD 2210633) protein is Fatty acid oxidation complex subunit alpha.